We begin with the raw amino-acid sequence, 251 residues long: Flap endonuclease Xni (251 aa).

Aspartate 104 lines the Mg(2+) pocket. Positions 160-249 constitute a 5'-3' exonuclease domain; sequence VLPRQLPDYW…IDGNLQQLRL (90 aa). Residues leucine 171, alanine 172, proline 180, valine 182, and isoleucine 185 each coordinate K(+). Residues 184 to 189 form an interaction with DNA region; the sequence is GIGPKS.

The protein belongs to the Xni family. Mg(2+) serves as cofactor. The cofactor is K(+).

Functionally, has flap endonuclease activity. During DNA replication, flap endonucleases cleave the 5'-overhanging flap structure that is generated by displacement synthesis when DNA polymerase encounters the 5'-end of a downstream Okazaki fragment. The sequence is that of Flap endonuclease Xni from Salmonella heidelberg (strain SL476).